The following is a 293-amino-acid chain: Xyloglucan endotransglucosylase/hydrolase protein 31 (293 aa).

The first 20 residues, 1-20 (MALSLIFLALLVLCPSSGHS), serve as a signal peptide directing secretion. One can recognise a GH16 domain in the interval 29 to 230 (YPSSRVPTSP…YRYQPFVAKY (202 aa)). Glu114 (nucleophile) is an active-site residue. Glu118 (proton donor) is an active-site residue. Xyloglucan contacts are provided by residues Glu118, 131-133 (QTN), 141-148 (DRNVIGRE), and 209-210 (DW). Disulfide bonds link Cys238/Cys246 and Cys280/Cys293. Arg285 is a xyloglucan binding site.

This sequence belongs to the glycosyl hydrolase 16 family. XTH group 3 subfamily. In terms of assembly, interacts with XTH17. The formation of an XTH17-XTH31 dimer may be required for XET activity. Contains at least one intrachain disulfide bond essential for its enzymatic activity. As to expression, predominantly expressed in root. Weakly expressed in influorescence stems. Expressed in root tips and elongation zones, stems, young leaves, flowers and siliques. Expressed in root, hypocotyl, and etiolated whole seedlings.

Its subcellular location is the secreted. It localises to the cell wall. The protein localises to the extracellular space. The protein resides in the apoplast. It is found in the cell membrane. It catalyses the reaction breaks a beta-(1-&gt;4) bond in the backbone of a xyloglucan and transfers the xyloglucanyl segment on to O-4 of the non-reducing terminal glucose residue of an acceptor, which can be a xyloglucan or an oligosaccharide of xyloglucan.. It carries out the reaction xyloglucan + H2O = xyloglucan oligosaccharides.. Its function is as follows. Catalyzes xyloglucan endohydrolysis (XEH) and/or endotransglycosylation (XET). Cleaves and religates xyloglucan polymers, an essential constituent of the primary cell wall, and thereby participates in cell wall construction of growing tissues. Involved in the accumulation of hemicelluloses. Has a high XEH activity and only a slight XET activity in vitro, but the main in planta activity seems to be XET, thus controlling aluminum sensitivity. Acceptor preferences are XXXGol = XXFGol &gt; XXLGol &gt; XLLGol = XLFGol. The sequence is that of Xyloglucan endotransglucosylase/hydrolase protein 31 from Arabidopsis thaliana (Mouse-ear cress).